A 447-amino-acid polypeptide reads, in one-letter code: ATP-dependent protease ATPase subunit HslU (447 aa).

ATP is bound by residues isoleucine 18, 60-65 (GVGKTE), aspartate 259, glutamate 325, and arginine 397.

This sequence belongs to the ClpX chaperone family. HslU subfamily. In terms of assembly, a double ring-shaped homohexamer of HslV is capped on each side by a ring-shaped HslU homohexamer. The assembly of the HslU/HslV complex is dependent on binding of ATP.

The protein localises to the cytoplasm. Its function is as follows. ATPase subunit of a proteasome-like degradation complex; this subunit has chaperone activity. The binding of ATP and its subsequent hydrolysis by HslU are essential for unfolding of protein substrates subsequently hydrolyzed by HslV. HslU recognizes the N-terminal part of its protein substrates and unfolds these before they are guided to HslV for hydrolysis. In Burkholderia thailandensis (strain ATCC 700388 / DSM 13276 / CCUG 48851 / CIP 106301 / E264), this protein is ATP-dependent protease ATPase subunit HslU.